Reading from the N-terminus, the 295-residue chain is MTNQIQKTISVCIIGRPNSGKSTLLNRIIGEKLSIVTPKVQTTRSIITGIVTLKDTQIILYDTPGIFEPKGMLEKAMVRCAWSSVYSADLVLSIIDSLKPLDNIAHNILNQFCLLNIVPIFLLNKIDIESKYLNDIKAFLKITHPKSLLFPISALLGKNVDVLLEYIKSKAKVSPWLYADDDITNLPMRFIAAEITREQLFLNLQQELPYKLTVQTEKFEELKDKSIKINQVIVISRENYKAIILGKNGAKIKDIGVKSRVQLEQFFCVPVHLFLFVKVHAFWENNQEFYQYMKI.

Residues 7–176 (KTISVCIIGR…IKSKAKVSPW (170 aa)) form the Era-type G domain. A G1 region spans residues 15-22 (GRPNSGKS). 15–22 (GRPNSGKS) is a binding site for GTP. The segment at 41 to 45 (QTTRS) is G2. A G3 region spans residues 62-65 (DTPG). Residues 62 to 66 (DTPGI) and 124 to 127 (NKID) each bind GTP. Positions 124-127 (NKID) are G4. A G5 region spans residues 152–154 (ISA). The KH type-2 domain occupies 204 to 281 (LQQELPYKLT…HLFLFVKVHA (78 aa)).

Belongs to the TRAFAC class TrmE-Era-EngA-EngB-Septin-like GTPase superfamily. Era GTPase family. Monomer.

It is found in the cytoplasm. It localises to the cell inner membrane. In terms of biological role, an essential GTPase that binds both GDP and GTP, with rapid nucleotide exchange. Plays a role in 16S rRNA processing and 30S ribosomal subunit biogenesis and possibly also in cell cycle regulation and energy metabolism. This is GTPase Era from Rickettsia prowazekii (strain Madrid E).